The chain runs to 441 residues: MSKVTPQPKIGFVSLGCPKNLVDSERILTELRTEGYDVVPSYDDADMVIVNTCGFIDSAVQESLEAIGEALNENGKVIVTGCLGAKEDQIREVHPKVLEITGPHSYEQVLEHVHHYVPKPKHNPFLSLVPEQGVKLTPRHYAYLKISEGCNHRCTFCIIPSMRGDLVSRPIGEVLSEAKRLVDAGVKEILVISQDTSAYGVDVKHRTGFHNGEPVKTSMVSLCEQLSKLGIWTRLHYVYPYPHVDDVIPLMAEGKILPYLDIPLQHASPRILKLMKRPGSVDRQLARIKQWRKICPELTLRSTFIVGFPGETEEDFQMLLDFLKEARLDRVGCFKYSPVEGADANALPDQVPEEVKEERWNRFMQLQQQISAERLQEKVGREILVIIDEVDEEGAIGRSMADAPEIDGAVYLNGETNVKPGDILRVKVEHADEYDLWGSRV.

The 111-residue stretch at 8–118 folds into the MTTase N-terminal domain; the sequence is PKIGFVSLGC…VLEHVHHYVP (111 aa). Positions 17, 53, 82, 150, 154, and 157 each coordinate [4Fe-4S] cluster. The region spanning 136–373 is the Radical SAM core domain; it reads LTPRHYAYLK…MQLQQQISAE (238 aa). A TRAM domain is found at 376-441; the sequence is QEKVGREILV…DEYDLWGSRV (66 aa).

The protein belongs to the methylthiotransferase family. RimO subfamily. The cofactor is [4Fe-4S] cluster.

It is found in the cytoplasm. It carries out the reaction L-aspartate(89)-[ribosomal protein uS12]-hydrogen + (sulfur carrier)-SH + AH2 + 2 S-adenosyl-L-methionine = 3-methylsulfanyl-L-aspartate(89)-[ribosomal protein uS12]-hydrogen + (sulfur carrier)-H + 5'-deoxyadenosine + L-methionine + A + S-adenosyl-L-homocysteine + 2 H(+). In terms of biological role, catalyzes the methylthiolation of an aspartic acid residue of ribosomal protein uS12. The protein is Ribosomal protein uS12 methylthiotransferase RimO of Escherichia coli (strain UTI89 / UPEC).